Consider the following 649-residue polypeptide: Flavin-dependent oxygenase ucdD (649 aa).

Residues Q92, I185, Y344, D370, and S386 each contribute to the FAD site.

It belongs to the PheA/TfdB FAD monooxygenase family. Homodimer. The cofactor is FAD.

It functions in the pathway secondary metabolite biosynthesis. In terms of biological role, nonribosomal peptide synthetase that mediates the biosynthesis of usterphenyllins and uscandidusins, p-terphenyl derivatives. Within the pathway, ucdD catalyzes the formation of 3,15-dihydroxyterphenyllin via dihydroxylation at C-3 of ring A and C-15 of ring C of the terphenyllin intermediate. The pathway begin with the biosynthesis of 4-hydroxyphenylpyruvate (HPPA) from L-tyrosine, possibly by the aminotransferase ucdG. The nonribosomal peptide synthetase ucdA then condenses two HPPA units to produce atromentin. The key step in this pathway is the reduction and dehydration of atromentin to form a terphenyl triol intermediate, performed by the NAD-dependent dehydrogenase ucdB. Further O-methylation by the methyltransferase ucdC forms terphenyllin carrying two methoxy moieties at C-9 and C-12, and subsequent dihydroxylation at C-3 of ring A and C-15 of ring C by the flavin-dependent oxygenase ucdD leads to 3,15-dihydroxyterphenyllin. Prenylation by ucdE at position C-5 of ring A forms usterphenyllin B, and is followed by a second prenylation at position C-14 of ring C to form usterphenyllin A. The following furan ring formation that leads to uscandidusins A and B was proven to be an unexpected spontaneous non-enzymatic reaction. The polypeptide is Flavin-dependent oxygenase ucdD (Aspergillus ustus).